A 139-amino-acid chain; its full sequence is Heavy metal-associated isoprenylated plant protein 13 (139 aa).

One can recognise an HMA domain in the interval 3 to 70; sequence PMKAVLQLSI…LCNTELVSVE (68 aa). The interval 70 to 94 is disordered; sequence EVVKPPEKKPEPEKPAPPKPAPAPA. The segment covering 73-85 has biased composition (basic and acidic residues); that stretch reads KPPEKKPEPEKPA. C136 carries the post-translational modification Cysteine methyl ester. Residue C136 is the site of S-farnesyl cysteine attachment. Positions 137-139 are cleaved as a propeptide — removed in mature form; that stretch reads VIM.

It belongs to the HIPP family.

In terms of biological role, probable heavy-metal-binding protein. This chain is Heavy metal-associated isoprenylated plant protein 13, found in Arabidopsis thaliana (Mouse-ear cress).